A 1077-amino-acid polypeptide reads, in one-letter code: ATP-dependent helicase/deoxyribonuclease subunit B (1077 aa).

The protein belongs to the helicase family. AddB/RexB type 2 subfamily. As to quaternary structure, heterodimer of AddA and RexB. The cofactor is Mg(2+).

In terms of biological role, the heterodimer acts as both an ATP-dependent DNA helicase and an ATP-dependent, dual-direction single-stranded exonuclease. Recognizes the chi site generating a DNA molecule suitable for the initiation of homologous recombination. This subunit has 5' -&gt; 3' nuclease activity but not helicase activity. This Streptococcus agalactiae serotype Ia (strain ATCC 27591 / A909 / CDC SS700) protein is ATP-dependent helicase/deoxyribonuclease subunit B.